Reading from the N-terminus, the 382-residue chain is RNA binding protein fox-1 homolog 1 (382 aa).

A disordered region spans residues 1 to 121 (MNCEREQLRG…NKSQPKRLHV (121 aa)). Residues 70–87 (QTHSEQSPADTSAQTVSG) are compositionally biased toward polar residues. Residues 88 to 99 (TATQTDDAAPTD) show a composition bias toward low complexity. Over residues 100–113 (GQPQTQPSENTENK) the composition is skewed to polar residues. The RRM domain occupies 117-193 (KRLHVSNIPF…RKIEVNNATA (77 aa)). Residue arginine 317 is modified to Asymmetric dimethylarginine. Positions 357 to 382 (MPQGSSPSTDFRGAKLHTSRPLLSGS) are disordered.

As to quaternary structure, binds to the C-terminus of ATXN2.

It is found in the nucleus. The protein localises to the cytoplasm. RNA-binding protein that regulates alternative splicing events by binding to 5'-UGCAUGU-3' elements. Prevents binding of U2AF2 to the 3'-splice site. Regulates alternative splicing of tissue-specific exons and of differentially spliced exons during erythropoiesis. The sequence is that of RNA binding protein fox-1 homolog 1 (RBFOX1) from Pongo abelii (Sumatran orangutan).